The primary structure comprises 198 residues: Na(+)-translocating NADH-quinone reductase subunit E (198 aa).

The next 6 helical transmembrane spans lie at 11–31 (AVFVENMALAFFLGMCTFLAV), 35–55 (VSTASGLGVAVTVVLGLAVPI), 77–97 (FLNFITFIGVIAALVQILEMI), 110–130 (GIFLPLIAVNCAIFGGVSFMV), 140–160 (IVYGFGSGIGWMLAIVAMAGI), and 176–196 (LGITFITTGLMALGFMSFSGV).

The protein belongs to the NqrDE/RnfAE family. Composed of six subunits; NqrA, NqrB, NqrC, NqrD, NqrE and NqrF.

It localises to the cell inner membrane. The catalysed reaction is a ubiquinone + n Na(+)(in) + NADH + H(+) = a ubiquinol + n Na(+)(out) + NAD(+). NQR complex catalyzes the reduction of ubiquinone-1 to ubiquinol by two successive reactions, coupled with the transport of Na(+) ions from the cytoplasm to the periplasm. NqrA to NqrE are probably involved in the second step, the conversion of ubisemiquinone to ubiquinol. In Klebsiella pneumoniae subsp. pneumoniae (strain ATCC 700721 / MGH 78578), this protein is Na(+)-translocating NADH-quinone reductase subunit E.